Consider the following 230-residue polypeptide: MEKIKVKEIFNNVYSVDFGDGLKRIATKSLIPGKRVYGEKLVYSDNIEYRVWNPNKSKLGAAIINGLKKMPIKKGTKVLYLGASAGTTPSHVADIAENSLVYALEFAPRIMREFIDSCNERKNLIPVLGDANRPQDYSNIVEKVDVIFEDVAQPNQAEILVKNAKWFLKENGYAMISIKARSVDVTKNPREIFAEQKKILIEGGFEIVDEVNIEPFEKDHMMMVGIWKGN.

S-adenosyl-L-methionine contacts are provided by residues 87–88 (TT), 105–106 (EF), 130–131 (DA), and 150–153 (DVAQ).

It belongs to the methyltransferase superfamily. Fibrillarin family. As to quaternary structure, interacts with nop5. Component of box C/D small ribonucleoprotein (sRNP) particles that contain rpl7ae, FlpA and nop5, plus a guide RNA.

In terms of biological role, involved in pre-rRNA and tRNA processing. Utilizes the methyl donor S-adenosyl-L-methionine to catalyze the site-specific 2'-hydroxyl methylation of ribose moieties in rRNA and tRNA. Site specificity is provided by a guide RNA that base pairs with the substrate. Methylation occurs at a characteristic distance from the sequence involved in base pairing with the guide RNA. In Methanococcus maripaludis (strain C5 / ATCC BAA-1333), this protein is Fibrillarin-like rRNA/tRNA 2'-O-methyltransferase.